The primary structure comprises 357 residues: 3-isopropylmalate dehydrogenase (357 aa).

76 to 89 (GPKWDALDSNIRPE) serves as a coordination point for NAD(+). Positions 96, 106, 134, and 224 each coordinate substrate. Positions 224, 248, and 252 each coordinate Mg(2+). 282–294 (GSAPDIAGQGVAN) contributes to the NAD(+) binding site.

Belongs to the isocitrate and isopropylmalate dehydrogenases family. LeuB type 1 subfamily. Homodimer. Requires Mg(2+) as cofactor. The cofactor is Mn(2+).

It is found in the cytoplasm. The enzyme catalyses (2R,3S)-3-isopropylmalate + NAD(+) = 4-methyl-2-oxopentanoate + CO2 + NADH. It participates in amino-acid biosynthesis; L-leucine biosynthesis; L-leucine from 3-methyl-2-oxobutanoate: step 3/4. Catalyzes the oxidation of 3-carboxy-2-hydroxy-4-methylpentanoate (3-isopropylmalate) to 3-carboxy-4-methyl-2-oxopentanoate. The product decarboxylates to 4-methyl-2 oxopentanoate. The sequence is that of 3-isopropylmalate dehydrogenase from Saccharophagus degradans (strain 2-40 / ATCC 43961 / DSM 17024).